The following is a 471-amino-acid chain: ATP synthase subunit beta (471 aa).

Position 156-163 (156-163 (GGAGVGKT)) interacts with ATP.

The protein belongs to the ATPase alpha/beta chains family. F-type ATPases have 2 components, CF(1) - the catalytic core - and CF(0) - the membrane proton channel. CF(1) has five subunits: alpha(3), beta(3), gamma(1), delta(1), epsilon(1). CF(0) has three main subunits: a(1), b(2) and c(9-12). The alpha and beta chains form an alternating ring which encloses part of the gamma chain. CF(1) is attached to CF(0) by a central stalk formed by the gamma and epsilon chains, while a peripheral stalk is formed by the delta and b chains.

The protein resides in the cell membrane. The catalysed reaction is ATP + H2O + 4 H(+)(in) = ADP + phosphate + 5 H(+)(out). Its function is as follows. Produces ATP from ADP in the presence of a proton gradient across the membrane. The catalytic sites are hosted primarily by the beta subunits. This chain is ATP synthase subunit beta, found in Mycoplasmoides gallisepticum (strain R(low / passage 15 / clone 2)) (Mycoplasma gallisepticum).